The primary structure comprises 211 residues: Small ribosomal subunit protein uS3 (211 aa).

The 69-residue stretch at 38–106 (LRKFIKKAFY…NIELNIIEVK (69 aa)) folds into the KH type-2 domain.

This sequence belongs to the universal ribosomal protein uS3 family. As to quaternary structure, part of the 30S ribosomal subunit. Forms a tight complex with proteins S10 and S14.

Binds the lower part of the 30S subunit head. Binds mRNA in the 70S ribosome, positioning it for translation. This chain is Small ribosomal subunit protein uS3, found in Ehrlichia ruminantium (strain Welgevonden).